The primary structure comprises 396 residues: L-lactate dehydrogenase (396 aa).

One can recognise an FMN hydroxy acid dehydrogenase domain in the interval 1 to 380 (MIISAASDYR…TQDSLVQGLG (380 aa)). A substrate-binding site is contributed by Tyr24. The FMN site is built by Ser106 and Gln127. Tyr129 lines the substrate pocket. An FMN-binding site is contributed by Thr155. Residue Arg164 coordinates substrate. Residue Lys251 coordinates FMN. Catalysis depends on His275, which acts as the Proton acceptor. Substrate is bound at residue Arg278. 306–330 (DSGIRNGLDVVRMIALGADTVLLGR) serves as a coordination point for FMN.

It belongs to the FMN-dependent alpha-hydroxy acid dehydrogenase family. FMN serves as cofactor.

It is found in the cell inner membrane. It catalyses the reaction (S)-lactate + A = pyruvate + AH2. Functionally, catalyzes the conversion of L-lactate to pyruvate. Is coupled to the respiratory chain. The polypeptide is L-lactate dehydrogenase (Shigella dysenteriae serotype 1 (strain Sd197)).